The following is a 427-amino-acid chain: Transcriptional enhancer factor TEF-3 (427 aa).

The disordered stretch occupies residues 1 to 32 (MTSNEWSSPDSPEGSSISGGSQALDKPIDNDA). A compositionally biased stretch (low complexity) spans 7–21 (SSPDSPEGSSISGGS). A DNA-binding region (TEA) is located at residues 29-105 (DNDAEGVWSP…QVLARRKARE (77 aa)). A Nuclear localization signal motif is present at residues 78-94 (IKLRTGKTRTRKQVSSH). The tract at residues 163–206 (QPGTSHDVKPFSQNTYPVQPPLPLPGFESPAGPTPSPSAPLAPP) is disordered. The segment covering 194–205 (GPTPSPSAPLAP) has biased composition (pro residues).

In terms of assembly, interacts with WWTR1/TAZ. Interacts with YAP1. Preferentially expressed in lung and in skeletal muscle.

Its subcellular location is the nucleus. Transcription factor which plays a key role in the Hippo signaling pathway, a pathway involved in organ size control and tumor suppression by restricting proliferation and promoting apoptosis. The core of this pathway is composed of a kinase cascade wherein MST1/MST2, in complex with its regulatory protein SAV1, phosphorylates and activates LATS1/2 in complex with its regulatory protein MOB1, which in turn phosphorylates and inactivates YAP1 oncoprotein and WWTR1/TAZ. Acts by mediating gene expression of YAP1 and WWTR1/TAZ, thereby regulating cell proliferation, migration and epithelial mesenchymal transition (EMT) induction. Binds specifically and non-cooperatively to the Sph and GT-IIC 'enhansons' (5'-GTGGAATGT-3') and activates transcription. Binds to the M-CAT motif. Might play a role in the embryonic development of skeletal muscle. The polypeptide is Transcriptional enhancer factor TEF-3 (Tead4) (Mus musculus (Mouse)).